Reading from the N-terminus, the 692-residue chain is uncharacterized protein (692 aa).

The N-terminal 39 residues, 1-39 (MLRLPSSMPIVSFPANPNLLINPQPSWPSRRGNSAVVVS), are a transit peptide targeting the chloroplast. The Protein kinase domain maps to 189–523 (EISPEPVAAA…RLESLLSESL (335 aa)). Residues 195–203 (VAAASLGQV) and lysine 218 each bind ATP. The active-site Proton acceptor is the aspartate 343.

This sequence belongs to the protein kinase superfamily. ADCK protein kinase family.

The protein resides in the plastid. It localises to the chloroplast. The protein localises to the plastoglobule. This is an uncharacterized protein from Arabidopsis thaliana (Mouse-ear cress).